The chain runs to 305 residues: Catechol 1,2-dioxygenase (305 aa).

4 residues coordinate Fe cation: tyrosine 163, tyrosine 197, histidine 221, and histidine 223.

The protein belongs to the intradiol ring-cleavage dioxygenase family. In terms of assembly, homodimer. Requires Fe(3+) as cofactor.

It carries out the reaction catechol + O2 = cis,cis-muconate + 2 H(+). Its pathway is aromatic compound metabolism; beta-ketoadipate pathway; 5-oxo-4,5-dihydro-2-furylacetate from catechol: step 1/3. The chain is Catechol 1,2-dioxygenase (catA) from Acinetobacter guillouiae (Acinetobacter genomosp. 11).